We begin with the raw amino-acid sequence, 517 residues long: Crotonobetaine/carnitine--CoA ligase (517 aa).

Belongs to the ATP-dependent AMP-binding enzyme family.

The enzyme catalyses 4-(trimethylamino)butanoate + ATP + CoA = 4-(trimethylamino)butanoyl-CoA + AMP + diphosphate. The catalysed reaction is crotonobetaine + ATP + CoA = crotonobetainyl-CoA + AMP + diphosphate. It carries out the reaction (R)-carnitine + ATP + CoA = (R)-carnitinyl-CoA + AMP + diphosphate. It functions in the pathway amine and polyamine metabolism; carnitine metabolism. Catalyzes the transfer of CoA to carnitine, generating the initial carnitinyl-CoA needed for the CaiB reaction cycle. Also has activity toward crotonobetaine and gamma-butyrobetaine. In Escherichia coli (strain ATCC 8739 / DSM 1576 / NBRC 3972 / NCIMB 8545 / WDCM 00012 / Crooks), this protein is Crotonobetaine/carnitine--CoA ligase.